We begin with the raw amino-acid sequence, 359 residues long: Mineralocorticoid receptor (359 aa).

Residues 1–49 (FKRAVEGQHNYLCAGRNDCIIDKIRRKNCPACRVRKCLQAGMNLGARKS) constitute a DNA-binding region (nuclear receptor). Cys13, Cys19, Cys29, and Cys32 together coordinate Zn(2+). The segment at 13-37 (CAGRNDCIIDKIRRKNCPACRVRKC) adopts an NR C4-type zinc-finger fold. Residues 48-96 (KSKKPGKLKGVNEDSTPTKEGGQTCPGSGGGYLSSGEKELSTSPTNALV) are disordered. The segment at 50 to 107 (KKPGKLKGVNEDSTPTKEGGQTCPGSGGGYLSSGEKELSTSPTNALVPHGPGGGLVTP) is hinge. In terms of domain architecture, NR LBD spans 108–339 (YLPPSICSVL…EFPEMLVEII (232 aa)). Asn145 and Gln151 together coordinate 21-hydroxyprogesterone. Aldosterone is bound by residues Asn145 and Gln151. Progesterone-binding residues include Asn145 and Gln151. The tract at residues 157–160 (KWAK) is important for coactivator binding. Positions 192 and 320 each coordinate 21-hydroxyprogesterone. Residues Arg192 and Thr320 each coordinate aldosterone. Positions 192 and 320 each coordinate progesterone.

It belongs to the nuclear hormone receptor family. NR3 subfamily.

It localises to the cytoplasm. Its subcellular location is the nucleus. Its function is as follows. Receptor for both mineralocorticoids (MC) such as cortisol. Binds to mineralocorticoid response elements (MRE) and transactivates target genes. The effect of MC is to increase ion and water transport and thus raise extracellular fluid volume and blood pressure and lower potassium levels. This chain is Mineralocorticoid receptor (nr3c2), found in Oncorhynchus mykiss (Rainbow trout).